The chain runs to 253 residues: 5'-nucleotidase SurE (253 aa).

A divalent metal cation contacts are provided by aspartate 8, aspartate 9, serine 39, and asparagine 95.

It belongs to the SurE nucleotidase family. A divalent metal cation serves as cofactor.

It localises to the cytoplasm. It carries out the reaction a ribonucleoside 5'-phosphate + H2O = a ribonucleoside + phosphate. Nucleotidase that shows phosphatase activity on nucleoside 5'-monophosphates. This Clostridium beijerinckii (strain ATCC 51743 / NCIMB 8052) (Clostridium acetobutylicum) protein is 5'-nucleotidase SurE.